The primary structure comprises 138 residues: Large ribosomal subunit protein uL16 (138 aa).

Belongs to the universal ribosomal protein uL16 family. Part of the 50S ribosomal subunit.

Functionally, binds 23S rRNA and is also seen to make contacts with the A and possibly P site tRNAs. This chain is Large ribosomal subunit protein uL16, found in Hyphomonas neptunium (strain ATCC 15444).